The chain runs to 246 residues: Enolase-phosphatase E1 (246 aa).

Residues D11 and E13 each coordinate Mg(2+). Substrate-binding positions include 140–141 (SS) and K174. D199 is a binding site for Mg(2+).

The protein belongs to the HAD-like hydrolase superfamily. MasA/MtnC family. As to quaternary structure, monomer. It depends on Mg(2+) as a cofactor.

Its subcellular location is the cytoplasm. It localises to the nucleus. It catalyses the reaction 5-methylsulfanyl-2,3-dioxopentyl phosphate + H2O = 1,2-dihydroxy-5-(methylsulfanyl)pent-1-en-3-one + phosphate. It participates in amino-acid biosynthesis; L-methionine biosynthesis via salvage pathway; L-methionine from S-methyl-5-thio-alpha-D-ribose 1-phosphate: step 3/6. It functions in the pathway amino-acid biosynthesis; L-methionine biosynthesis via salvage pathway; L-methionine from S-methyl-5-thio-alpha-D-ribose 1-phosphate: step 4/6. Its function is as follows. Bifunctional enzyme that catalyzes the enolization of 2,3-diketo-5-methylthiopentyl-1-phosphate (DK-MTP-1-P) into the intermediate 2-hydroxy-3-keto-5-methylthiopentenyl-1-phosphate (HK-MTPenyl-1-P), which is then dephosphorylated to form the acireductone 1,2-dihydroxy-3-keto-5-methylthiopentene (DHK-MTPene). The protein is Enolase-phosphatase E1 of Acyrthosiphon pisum (Pea aphid).